Here is a 152-residue protein sequence, read N- to C-terminus: Atypical leghemoglobin 2-1 (152 aa).

Residues 3–152 (TFSEEQEALV…LAGVIKKGMS (150 aa)) form the Globin domain. Tyr31 is modified (nitrated tyrosine). Ser46 is a heme b binding site. Ser46 carries the phosphoserine modification. His64 contributes to the O2 binding site. Positions 67, 99, and 102 each coordinate heme b. Residue Tyr140 is modified to Nitrated tyrosine.

It belongs to the plant globin family. Monomer. In terms of processing, nitrated in effective nodules and particularly in hypoxic conditions; this mechanism may play a protective role in the symbiosis by buffering toxic peroxynitrite NO(2)(-). Nitration level decrease during nodule senescence. Post-translationally, phosphorylation at Ser-46 disrupts the molecular environment of its porphyrin ring oxygen binding pocket, thus leading to a reduced oxygen consumption and to the delivery of oxygen O(2) to symbiosomes. In terms of tissue distribution, mainly expressed in leaves and, at low levels, in roots of non-nodulated plants. However, accumulates also in nodules and roots, and, to a lower extent, in leaves, stems, flowers and fruits, in nodulated plants.

In terms of biological role, atypical leghemoglobin that reversibly binds oxygen O(2) through a pentacoordinated heme iron. In nodules, facilitates the diffusion of oxygen to the bacteroids while preventing the bacterial nitrogenase from being inactivated by buffering dioxygen, nitric oxide and carbon monoxide. This role is essential for symbiotic nitrogen fixation (SNF). Seems not restricted to symbiotic nitrogen fixation and root nodules formation, but also contributes to general plant development and metabolism. In Lotus japonicus (Lotus corniculatus var. japonicus), this protein is Atypical leghemoglobin 2-1.